A 328-amino-acid polypeptide reads, in one-letter code: Ferredoxin--NADP reductase (328 aa).

FAD-binding residues include Glu-36, Gln-44, Tyr-49, Val-89, Phe-123, Asp-284, and Thr-324.

Belongs to the ferredoxin--NADP reductase type 2 family. In terms of assembly, homodimer. It depends on FAD as a cofactor.

It carries out the reaction 2 reduced [2Fe-2S]-[ferredoxin] + NADP(+) + H(+) = 2 oxidized [2Fe-2S]-[ferredoxin] + NADPH. The polypeptide is Ferredoxin--NADP reductase (Lacticaseibacillus paracasei (strain ATCC 334 / BCRC 17002 / CCUG 31169 / CIP 107868 / KCTC 3260 / NRRL B-441) (Lactobacillus paracasei)).